Here is a 315-residue protein sequence, read N- to C-terminus: Ferrochelatase (315 aa).

Fe cation is bound by residues histidine 193 and glutamate 273.

This sequence belongs to the ferrochelatase family.

It is found in the cytoplasm. The enzyme catalyses heme b + 2 H(+) = protoporphyrin IX + Fe(2+). The protein operates within porphyrin-containing compound metabolism; protoheme biosynthesis; protoheme from protoporphyrin-IX: step 1/1. Catalyzes the ferrous insertion into protoporphyrin IX. The sequence is that of Ferrochelatase from Wolbachia pipientis wMel.